A 296-amino-acid polypeptide reads, in one-letter code: MTPPENQNIIEERKELIKEVLSAYPEKAAKKREKHLSVYEEGKSDCGVKSNIKSLPGVMTARGCAYAGSKGVVWGPIKDMIHISHGPVGCGYWSWSGRRNYYIGTTGIDTFGTMHFTSDFQERDIVFGGDKKLVKLIQELDVLFPLNRGVSIQSECPIGLIGDDIEAVARKTSKEIGKPVVPVRCEGFRGVSQSLGHHIANDMVRDWVFTRSDQAKKDGTLKFEGTPYDVAIIGDYNIGGDAWASRILLEEIALRVVAQWSGDGTINEMLMTPNVKMNLIHCYRSMNYISRHMEEA.

Cysteine 64, cysteine 90, and cysteine 156 together coordinate [8Fe-7S] cluster. Residue cysteine 282 participates in [7Fe-Mo-9S-C-homocitryl] cluster binding.

It belongs to the NifD/NifK/NifE/NifN family. As to quaternary structure, tetramer of two alpha and two beta chains. Forms complex with the iron protein (nitrogenase component 2). [8Fe-7S] cluster is required as a cofactor. [7Fe-Mo-9S-C-homocitryl] cluster serves as cofactor.

The enzyme catalyses N2 + 8 reduced [2Fe-2S]-[ferredoxin] + 16 ATP + 16 H2O = H2 + 8 oxidized [2Fe-2S]-[ferredoxin] + 2 NH4(+) + 16 ADP + 16 phosphate + 6 H(+). Functionally, this molybdenum-iron protein is part of the nitrogenase complex that catalyzes the key enzymatic reactions in nitrogen fixation. The protein is Nitrogenase molybdenum-iron protein alpha chain (nifD) of Nostoc commune.